The sequence spans 297 residues: UBX domain-containing protein 1 (297 aa).

N-acetylalanine is present on alanine 2. The region spanning 2 to 42 (AELTALESLIEMGFPRGRAEKALALTGNQGIEAAMDWLMEH) is the UBA domain. A disordered region spans residues 38 to 212 (WLMEHEDDPD…QEPPTKREYD (175 aa)). Acidic residues predominate over residues 42–52 (HEDDPDVDEPL). An interaction with BRCA1 region spans residues 43–297 (EDDPDVDEPL…VLIVAKKCPS (255 aa)). 2 stretches are compositionally biased toward basic and acidic residues: residues 86 to 122 (LTEE…EREK) and 137 to 177 (KLQE…ERAQ). Residues 86-172 (LTEEERQEQT…RVREKIERDK (87 aa)) are a coiled coil. Position 199 is a phosphoserine (serine 199). Residue serine 200 is modified to Phosphoserine; by MAPK12. Threonine 207 and threonine 229 each carry phosphothreonine. Residues 209 to 291 (REYDQCRIQV…GLVPSAVLIV (83 aa)) form the UBX domain. A Phosphoserine modification is found at serine 270.

In terms of assembly, component of a complex required to couple retrotranslocation, ubiquitination and deglycosylation composed of NGLY1, SAKS1, AMFR, VCP and RAD23B. Interacts with HOMER2. Interacts directly with VCP. Interacts with BRCA1 and BARD1; interaction takes place when BRCA1 is not autoubiquitinated bur is strongly enhanced in the presence of autoubiquitinated BRCA1.

The protein localises to the cytoplasm. In terms of biological role, ubiquitin-binding protein that interacts with the BRCA1-BARD1 heterodimer, and regulates its activity. Specifically binds 'Lys-6'-linked polyubiquitin chains. Interaction with autoubiquitinated BRCA1, leads to inhibit the E3 ubiquitin-protein ligase activity of the BRCA1-BARD1 heterodimer. Component of a complex required to couple deglycosylation and proteasome-mediated degradation of misfolded proteins in the endoplasmic reticulum that are retrotranslocated in the cytosol. This Rattus norvegicus (Rat) protein is UBX domain-containing protein 1 (Ubxn1).